A 122-amino-acid chain; its full sequence is Small ribosomal subunit protein uS13 (122 aa).

The disordered stretch occupies residues 97-122; that stretch reads PVRGQRTHTNARTRKGPAKAIAGKKK.

The protein belongs to the universal ribosomal protein uS13 family. In terms of assembly, part of the 30S ribosomal subunit. Forms a loose heterodimer with protein S19. Forms two bridges to the 50S subunit in the 70S ribosome.

Located at the top of the head of the 30S subunit, it contacts several helices of the 16S rRNA. In the 70S ribosome it contacts the 23S rRNA (bridge B1a) and protein L5 of the 50S subunit (bridge B1b), connecting the 2 subunits; these bridges are implicated in subunit movement. Contacts the tRNAs in the A and P-sites. The polypeptide is Small ribosomal subunit protein uS13 (Brucella abortus (strain S19)).